The primary structure comprises 41 residues: Large ribosomal subunit protein bL36 (41 aa).

Belongs to the bacterial ribosomal protein bL36 family.

The sequence is that of Large ribosomal subunit protein bL36 from Cereibacter sphaeroides (strain ATCC 17029 / ATH 2.4.9) (Rhodobacter sphaeroides).